Here is a 206-residue protein sequence, read N- to C-terminus: Large ribosomal subunit protein uL4 (206 aa).

The disordered stretch occupies residues 63–97; the sequence is MYKQKGTGRARHHSARAPQFRGGGKAHGPVVRSHE. Residues 64–77 show a composition bias toward basic residues; the sequence is YKQKGTGRARHHSA.

The protein belongs to the universal ribosomal protein uL4 family. In terms of assembly, part of the 50S ribosomal subunit.

One of the primary rRNA binding proteins, this protein initially binds near the 5'-end of the 23S rRNA. It is important during the early stages of 50S assembly. It makes multiple contacts with different domains of the 23S rRNA in the assembled 50S subunit and ribosome. In terms of biological role, forms part of the polypeptide exit tunnel. The chain is Large ribosomal subunit protein uL4 from Rhizobium leguminosarum bv. trifolii (strain WSM2304).